We begin with the raw amino-acid sequence, 61 residues long: Small ribosomal subunit protein uS14 (61 aa).

Residues C24, C27, C40, and C43 each contribute to the Zn(2+) site.

This sequence belongs to the universal ribosomal protein uS14 family. Zinc-binding uS14 subfamily. Part of the 30S ribosomal subunit. Contacts proteins S3 and S10. Requires Zn(2+) as cofactor.

In terms of biological role, binds 16S rRNA, required for the assembly of 30S particles and may also be responsible for determining the conformation of the 16S rRNA at the A site. In Mesoplasma florum (strain ATCC 33453 / NBRC 100688 / NCTC 11704 / L1) (Acholeplasma florum), this protein is Small ribosomal subunit protein uS14.